The primary structure comprises 64 residues: uncharacterized protein (64 aa).

This is an uncharacterized protein from Saccharomyces cerevisiae (strain ATCC 204508 / S288c) (Baker's yeast).